Here is a 266-residue protein sequence, read N- to C-terminus: MLIVLSPAKALDFAQPPVQAPLTAPQMTEDTSELAKVARKLTARDLSRLMSLSESLAKLNRERFQAFDPVSEEGLQAAFAFNGDVYQGLRARELDRKALAWAQDHVRILSGLYGVLRPLDAIQPYRLEMGVRLKTKRGSTLYDFWGEKVSLALNEAAQGHKDRTLVNCASGEYFGAVDRRALKLPVVSCRFLEEKDGQARIISFYAKRARGLLARYAIDNRIERAADLKGFDAAGYRFAPELSTDEEFTFARPQPPPPAASRNKED.

The disordered stretch occupies residues Asp245–Asp266.

It belongs to the UPF0246 family.

This is UPF0246 protein PHZ_c0561 from Phenylobacterium zucineum (strain HLK1).